The chain runs to 761 residues: MIVKCPICDGTGKKVVKYKTCPVCEGTGFIDEFSPKQHMKRVSKRATYDLDYGEIPCPKCKGTGKVPVYAKCDFCGGSGKVVKCDRCGAIIGKYPDFKDRTLCDKCLKEEEERKKGLRNVYVFDELATFYDVEPGKFYKGVVTRIEKYGAFINLNEQVRGLLRPRDMISLRLENLNVGDEIIVQAIDVRPEKREIDFKYIPLTTYDLVKYEKEVPLSQIKDISQNLVEMRDQVVHIRGEVVQIVQTPGPTVFTITDGTDFAWVAALEIAGLRAHPDVKVGDIVDVIGRVTIRDGRLQIERIKLQKLEGDEAEEIRKKIEEEIDRRAEPAKDIPFLVKSEVLERLRPKMADVAKRIRKAVLDGRPIIIRHHADTDGYCGGIALEKAILPIIDKFAIDVDAIWHFFKRRPSKAPFYELEDVTKDLVFSIEDALKFGQKLPLIVLIDNGSTDEDIPAISKAKAYGIEVIVIDHHFPGEVVDGKVEVDDYVDAHVNPYLVGGDSNLTAGVLGTEIARMINPDVEDEIKHIPGIAVVGDHAKGEEAEQYVKIALDRLNELSKKYGKGRTYDREYLEKIALCMDFEAFYLRFMDGKGIVDDILATNIKEFGRHEELIDILYEQAMKMVERQMKAVIPALKTEFLENGIILNTLDVEKYAHKFTFPAPGKTTGFAHDYIVQKYGEDKPIITLSYGPDFGVVRATDAVHEKYNFNLNLIVEQLMEEIPEASLDGGGHECAGSLKFVEGLRDKVIGRFIEIIKNMKPKEQ.

Residues 1–84 (MIVKCPICDG…CGGSGKVVKC (84 aa)) form a CR-type zinc finger. In terms of domain architecture, S1 motif spans 135–200 (GKFYKGVVTR…EKREIDFKYI (66 aa)).

This is an uncharacterized protein from Methanocaldococcus jannaschii (strain ATCC 43067 / DSM 2661 / JAL-1 / JCM 10045 / NBRC 100440) (Methanococcus jannaschii).